We begin with the raw amino-acid sequence, 118 residues long: Mitochondrial import inner membrane translocase subunit Tim10 B (118 aa).

The Twin CX3C motif motif lies at 31-55; that stretch reads CFQRCVPSLHHRALDAEEEACLHSC. 2 cysteine pairs are disulfide-bonded: cysteine 31–cysteine 55 and cysteine 35–cysteine 51. Residues 89 to 118 are disordered; the sequence is SAVPHATAEQLETSPSRSLPSGNLGKGGAG. The segment covering 98–109 has biased composition (polar residues); it reads QLETSPSRSLPS.

It belongs to the small Tim family. In terms of assembly, component of the TIM22 complex, which core is composed of TIMM22, associated with TIMM10 (TIMM10A and/or TIMM10B), TIMM9, AGK and TIMM29.

The protein resides in the mitochondrion inner membrane. Component of the TIM22 complex, a complex that mediates the import and insertion of multi-pass transmembrane proteins into the mitochondrial inner membrane. The TIM22 complex forms a twin-pore translocase that uses the membrane potential as the external driving force. In the TIM22 complex, it may act as a docking point for the soluble 70 kDa complex that guides the target proteins in transit through the aqueous mitochondrial intermembrane space. The protein is Mitochondrial import inner membrane translocase subunit Tim10 B (TIMM10B) of Bos taurus (Bovine).